A 779-amino-acid polypeptide reads, in one-letter code: Anion/proton exchange transporter GEF1 (779 aa).

Residues 1–75 lie on the Cytoplasmic side of the membrane; it reads MPTTYVPINQ…REVIWDRAKT (75 aa). Residues 76 to 96 form a helical membrane-spanning segment; that stretch reads FITLSSTAIVIGCIAGFLQVF. Topologically, residues 97–154 are lumenal; sequence TETLVNWKTGHCQRNWLLNKSFCCNGVVNEVTSTSNLLLKRQEFECEAQGLWIAWKGH. Residues 155–175 form a helical membrane-spanning segment; the sequence is VSPFIIFMLLSVLFALISTLL. The Cytoplasmic portion of the chain corresponds to 176-177; that stretch reads VK. The helical transmembrane segment at 178–198 threads the bilayer; that stretch reads YVAPMATGSGISEIKVWVSGF. Over 199-203 the chain is Lumenal; sequence EYNKE. Residues 204-224 form a helical membrane-spanning segment; the sequence is FLGFLTLVIKSVALPLAISSG. At 225–264 the chain is on the cytoplasmic side; that stretch reads LSVGKEGPSVHYATCCGYLLTKWLLRDTLTYSSQYEYITA. The helical transmembrane segment at 265 to 285 threads the bilayer; sequence ASGAGVAVAFGAPIGGVLFGL. The Lumenal portion of the chain corresponds to 286–296; that stretch reads EEIASANRFNS. A helical transmembrane segment spans residues 297–319; sequence STLWKSYYVALVAITTLKYIDPF. The Cytoplasmic segment spans residues 320–336; that stretch reads RNGRVILFNVTYDRDWK. Residues 337-357 form a helical membrane-spanning segment; it reads VQEIPIFIALGIFGGLYGKYI. Over 358 to 369 the chain is Lumenal; sequence SKWNINFIHFRK. Residues 370–390 form a helical membrane-spanning segment; the sequence is MYLSSWPVQEVLFLATLTALI. Residues 391–436 are Cytoplasmic-facing; the sequence is SYFNEFLKLDMTESMGILFHECVKNDNTSTFSHRLCQLDENTHAFE. Residues 437–457 traverse the membrane as a helical segment; it reads FLKIFTSLCFATVIRALLVVV. Residues 458 to 465 are Lumenal-facing; that stretch reads SYGARVPA. A helical transmembrane segment spans residues 466 to 486; sequence GIFVPSMAVGATFGRAVSLLV. Residues 487–500 are Cytoplasmic-facing; that stretch reads ERFISGPSVITPGA. The chain crosses the membrane as a helical span at residues 501–523; the sequence is YAFLGAAATLSGITNLTLTVVVI. Over 524 to 529 the chain is Lumenal; that stretch reads MFELTG. The chain crosses the membrane as a helical span at residues 530 to 552; the sequence is AFMYIIPLMIVVAITRIILSTSG. Over 553–779 the chain is Cytoplasmic; the sequence is ISGGIADQMI…FTTNRNGNVI (227 aa). CBS domains are found at residues 591 to 659 and 688 to 744; these read MSSK…VNST and MNES…YREV.

Belongs to the chloride channel (TC 2.A.49) family. Homodimer. Interacts with GET3. Post-translationally, proteolytically processed in the secretory pathway by protease KEX2 within the first extracellular loop. However, both the N- and C-terminal products of the cleavage reaction are required for assembly of a functional channel.

The protein localises to the golgi apparatus membrane. The protein resides in the endosome membrane. It localises to the prevacuolar compartment membrane. In terms of biological role, anion/proton exchange transporter involved in iron and copper cation homeostasis. Involved in intracellular iron metabolism during growth on fermentable and non fermentable carbon sources. Required for proper copper-loading and maturation of multicopper oxidase FET3. Important for adjusting intracellular compartment pH to more alkaline pH under iron limitation. May also transport chloride ions through the plasma membrane. The protein is Anion/proton exchange transporter GEF1 (GEF1) of Saccharomyces cerevisiae (strain ATCC 204508 / S288c) (Baker's yeast).